We begin with the raw amino-acid sequence, 514 residues long: Myocyte-specific enhancer factor 2D (514 aa).

Residues 3–57 (RKKIQIQRITDERNRQVTFTKRKFGLMKKAYELSVLCDCEIALIIFNHSNKLFQY) enclose the MADS-box domain. Positions 58–86 (ASTDMDKVLLKYTEYNEPHESRTNADIIE) form a DNA-binding region, mef2-type. A phosphoserine mark is found at aspartate 97, serine 98, and serine 106. Leucine 107 is subject to Phosphothreonine. Serine 110 is subject to Phosphoserine. A Phosphoserine; by PKA modification is found at serine 121. The interval 174–207 (TDPRLLSPQQPALQRNSVSPGLPQRPASAGAMLG) is disordered. Phosphoserine; by MAPK7 is present on serine 180. Polar residues predominate over residues 180-192 (SPQQPALQRNSVS). Serine 190 is subject to Phosphoserine; by PKA. Position 231 is a phosphoserine (serine 231). The disordered stretch occupies residues 244–269 (NKVIPAKSPPPPTHNTQLGAPSRKPD). N6-acetyllysine is present on lysine 245. Position 251 is a phosphoserine (serine 251). The tract at residues 286–292 (TEDHLDL) is beta domain. Disordered regions lie at residues 364–399 (WQQP…QQPH) and 430–514 (SIKS…WTLK). Over residues 367–396 (PQPPQQPQPPQPPQSQPQPPQPQPQQPPQQ) the composition is skewed to pro residues. Lysine 432 carries the N6-acetyllysine; alternate modification. Lysine 432 participates in a covalent cross-link: Glycyl lysine isopeptide (Lys-Gly) (interchain with G-Cter in SUMO); alternate. Serine 437 is subject to Phosphoserine.

This sequence belongs to the MEF2 family. In terms of assembly, forms a complex with class II HDACs in undifferentiating cells. On myogenic differentiation, HDACs are released into the cytoplasm allowing MEF2s to interact with other proteins for activation. Interacts with HDAC4 (in undifferentiating cells); the interaction translocates MEF2D to nuclear dots. Forms a heterodimer with MEF2A. Interacts with MAPK7; the interaction phosphorylates but does not activate MEF2D. Interacts with MYOG. Interacts with CCAR2 and HDAC3. Phosphorylated on Ser-437 is which is required for Lys-432 sumoylation and inhibits transcriptional activity. Phosphorylation on this residue by CDK5 is dependent on p35 and calpains. Phosphorylated by PKA at Ser-121 and Ser-190 represses transcriptional activity in embryonic and postnatal skeletal muscle, and stabilizes protein levels. No in vitro phosphorylation by PKA on Thr-20. Phosphorylated and activated by CaMK4. In terms of processing, acetylated on Lys-432 by CREBBP. Acetylated by EP300. Deacetylated by SIRT1 and HDAC3. Post-translationally, sumoylated on Lys-432 with SUMO2 but not SUMO1; which inhibits transcriptional activity and myogenic activity. Desumoylated by SENP3. Proteolytically cleaved in cerebellar granule neurons by caspase 7 following neurotoxicity. Preferentially cleaves the CDK5-mediated hyperphosphorylated form which leads to neuron apoptosis and transcriptional inactivation. Widely expressed though mainly restricted to skeletal and cardiac muscle, brain, neurons and lymphocytes. Differentially expressed depending on if isoforms contain the beta domain or not, with the total expression of the beta domain-lacking isoforms vastly exceeding that of the beta domain-containing isoforms. Isoforms containing the beta domain are expressed primarily in skeletal and cardiac muscle and in brain. Also present in lung and testis. Splicing to include the beta domain is induced in differentiating myocytes. Isoforms lacking the beta domain are expressed less abundantly in skeletal muscle, brain and lymphocytes, and are uniquely found in ovary, liver, spleen and kidney. In embryos, the beta domain-containing and beta domain-lacking isoforms are equally expressed. Also expressed cerebellar granule neurons and other regions of the CNS. Highest levels in the olfactory bulb, cortex, hippocampus, thalamus and cerebellum.

It is found in the nucleus. Functionally, transcriptional activator which binds specifically to the MEF2 element, 5'-YTA[AT](4)TAR-3', found in numerous muscle-specific, growth factor- and stress-induced genes. Mediates cellular functions not only in skeletal and cardiac muscle development, but also in neuronal differentiation and survival. Plays diverse roles in the control of cell growth, survival and apoptosis via p38 MAPK signaling in muscle-specific and/or growth factor-related transcription. Plays a critical role in the regulation of neuronal apoptosis. The polypeptide is Myocyte-specific enhancer factor 2D (Mef2d) (Mus musculus (Mouse)).